Reading from the N-terminus, the 481-residue chain is Adenosylhomocysteinase (481 aa).

Residues Thr65, Asp140, and Glu200 each coordinate substrate. 201–203 is a binding site for NAD(+); the sequence is TTT. Substrate is bound by residues Lys230 and Asp234. NAD(+) is bound by residues Asn235, 264 to 269, Glu287, Asn322, 343 to 345, and Asn393; these read GYGDVG and IGH.

Belongs to the adenosylhomocysteinase family. It depends on NAD(+) as a cofactor.

Its subcellular location is the cytoplasm. It carries out the reaction S-adenosyl-L-homocysteine + H2O = L-homocysteine + adenosine. Its pathway is amino-acid biosynthesis; L-homocysteine biosynthesis; L-homocysteine from S-adenosyl-L-homocysteine: step 1/1. May play a key role in the regulation of the intracellular concentration of adenosylhomocysteine. The polypeptide is Adenosylhomocysteinase (Polynucleobacter necessarius subsp. necessarius (strain STIR1)).